The chain runs to 291 residues: 4-hydroxy-tetrahydrodipicolinate synthase (291 aa).

Threonine 44 lines the pyruvate pocket. The active-site Proton donor/acceptor is the tyrosine 132. The Schiff-base intermediate with substrate role is filled by lysine 160. Valine 202 contacts pyruvate.

Belongs to the DapA family. Homotetramer; dimer of dimers.

Its subcellular location is the cytoplasm. It carries out the reaction L-aspartate 4-semialdehyde + pyruvate = (2S,4S)-4-hydroxy-2,3,4,5-tetrahydrodipicolinate + H2O + H(+). Its pathway is amino-acid biosynthesis; L-lysine biosynthesis via DAP pathway; (S)-tetrahydrodipicolinate from L-aspartate: step 3/4. Catalyzes the condensation of (S)-aspartate-beta-semialdehyde [(S)-ASA] and pyruvate to 4-hydroxy-tetrahydrodipicolinate (HTPA). In Clostridium perfringens (strain 13 / Type A), this protein is 4-hydroxy-tetrahydrodipicolinate synthase.